The following is a 283-amino-acid chain: MGKEADVEAGGVRDYEDPPPAPLVDIDELGRWSLYRAVIAEFVATLLFLYVTVATVIGYKHQTDASASGDDAACGGVGVLGIAWAFGGMIFILVYCTAGISGGHINPAVTFGLFLARKVSLVRAILYIVAQCLGAVCGVALVKGFQSSFYDRYGGGANELAAGYSKGTGLAAEIIGTFVLVYTVFSATDPKRNARDSHVPVLAPLPIGFAVFMVHLATIPVTGTGINPARSLGAAVVYNNSKAWSDQWIFWVGPFIGAAIAALYHQIVLRASARGYGSFRSNA.

2 consecutive transmembrane segments (helical) span residues 37 to 57 (AVIA…ATVI) and 74 to 94 (CGGV…FILV). Residues 106–108 (NPA) carry the NPA 1 motif. The next 3 membrane-spanning stretches (helical) occupy residues 125 to 145 (ILYI…VKGF), 167 to 187 (GTGL…VFSA), and 199 to 219 (VPVL…LATI). The short motif at 227 to 229 (NPA) is the NPA 2 element. Residues 249–269 (IFWVGPFIGAAIAALYHQIVL) traverse the membrane as a helical segment.

This sequence belongs to the MIP/aquaporin (TC 1.A.8) family. PIP (TC 1.A.8.11) subfamily. As to expression, expressed in roots.

The protein resides in the cell membrane. Its function is as follows. Water channel required to facilitate the transport of water across cell membrane. May play a role in root water uptake. The protein is Aquaporin PIP2-5 (PIP2-5) of Oryza sativa subsp. japonica (Rice).